Reading from the N-terminus, the 146-residue chain is D-aminoacyl-tRNA deacylase (146 aa).

The Gly-cisPro motif, important for rejection of L-amino acids signature appears at 137-138 (GP).

This sequence belongs to the DTD family. In terms of assembly, homodimer.

It is found in the cytoplasm. It catalyses the reaction glycyl-tRNA(Ala) + H2O = tRNA(Ala) + glycine + H(+). It carries out the reaction a D-aminoacyl-tRNA + H2O = a tRNA + a D-alpha-amino acid + H(+). Its function is as follows. An aminoacyl-tRNA editing enzyme that deacylates mischarged D-aminoacyl-tRNAs. Also deacylates mischarged glycyl-tRNA(Ala), protecting cells against glycine mischarging by AlaRS. Acts via tRNA-based rather than protein-based catalysis; rejects L-amino acids rather than detecting D-amino acids in the active site. By recycling D-aminoacyl-tRNA to D-amino acids and free tRNA molecules, this enzyme counteracts the toxicity associated with the formation of D-aminoacyl-tRNA entities in vivo and helps enforce protein L-homochirality. The sequence is that of D-aminoacyl-tRNA deacylase from Bacillus thuringiensis subsp. konkukian (strain 97-27).